A 485-amino-acid chain; its full sequence is MECTTVKLSVALGEEVVQLSTLDQQAQRAYANLLLVFKLSQNADADHVFSSLKRGLGAALTEVPDFASLVVPVPGSKKNELQLRLGPDSGVPFKLVRQDALASHLEKHSSGGTYAELARDNFPLASVPTELLFNQLPASELACARGLPGLLAQASVVDGGLIMGLSWHHTVSDARGINTLLSSWARHTKMWAGQGTIGSPSAAPEPTRDRWRLTCGPRDVHVSHFSDYQINAAARTPLSPAAAHLLDRPDTTNATAGLSTWYFSKKALSSLRGELGRAAADGSDAVQFTSGEAVSALVWKHLSLARLLHQQLAHETSLFASRIDFRGRAKPAFADGYIGNINEPNARTRMRLAEVCAPSSPASLVALAAAVREAIGAMDEKTMREFIGLVEGSSSVTDVYWDYNTFPGPDLVVTDMSGMDTLRQEWGGDLGQPVCIRSGSREKGVAYFLPQDAQGGFEVQLQCTAEDLGRLKDDSLFTKYAEFRS.

His169 acts as the Proton acceptor in catalysis.

The protein belongs to the plant acyltransferase family. In terms of assembly, monomer.

The protein operates within secondary metabolite biosynthesis. Its function is as follows. Acyltransferase; part of the gene cluster that mediates the biosynthesis of beauveriolides I and III, cyclodepsipeptides acting as inhibitors of the acyl-CoA:cholesterol acyltransferase. The HR-PKS cm3B initiates the biosynthesis of beauveriolides by iteratively catalyzing the formation of the linear polyketide chain. The ATP-dependent acetyl-CoA ligase cm3D converts the polyketide carboxylic acid to a CoA thioester which id shuttled to the first T domain in the NRPS cm3A by the acetyltransferase cm3C. Cm3A contains 13 domains and assembles the polyketide chain, L-phenylalanine, L-alanine, and D-leucine (or D-allo-isoleucine) to form beauveriolide I (or beauveriolide III). The production of both beauveriolides I and III suggests the substrate adaptability of cm3B, using different amino acids as substrates. The sequence is that of Acyltransferase cm3D from Cordyceps militaris (strain CM01) (Caterpillar fungus).